The sequence spans 164 residues: SVVLDTKGQPVRNAADAYYLEPVARGDGGLALAKVGNEAEPKAVVLDPNHRPGLTVRFETPLRINIIKESFFLNIKFVPSSSESEVWEVRQQYPEGLAVKVTDTKSLVGPFRVEKEGEGYKIVYYPDRGETGLDIGLVHRNEKYYLAVKDGEPFVFKIRKATDE.

The protein belongs to the leguminous Kunitz-type inhibitor family.

In terms of biological role, inhibitor of trypsin and human plasma kallikrein with a Ki of 2.9 nM and 14.0 nM, respectively. Does not inhibit chymotrypsin, porcine pancreatic elastas, human neutrophil elastase, coagulation factor Xa, human thrombin, porcine pancreatic kallikrein or plasmin. The sequence is that of Kunitz-type trypsin inhibitor BrTI from Bauhinia rufa (Orchid tree).